The sequence spans 481 residues: Arginine biosynthesis bifunctional protein ArgJ, chloroplastic (481 aa).

Residues threonine 225, lysine 251, threonine 262, glutamate 349, asparagine 476, and threonine 481 each coordinate substrate. Catalysis depends on threonine 262, which acts as the Nucleophile.

The protein belongs to the ArgJ family. As to quaternary structure, heterodimer of an alpha and a beta chain.

The protein localises to the plastid. It localises to the chloroplast. It catalyses the reaction N(2)-acetyl-L-ornithine + L-glutamate = N-acetyl-L-glutamate + L-ornithine. The catalysed reaction is L-glutamate + acetyl-CoA = N-acetyl-L-glutamate + CoA + H(+). The protein operates within amino-acid biosynthesis; L-arginine biosynthesis; L-ornithine and N-acetyl-L-glutamate from L-glutamate and N(2)-acetyl-L-ornithine (cyclic): step 1/1. Its pathway is amino-acid biosynthesis; L-arginine biosynthesis; N(2)-acetyl-L-ornithine from L-glutamate: step 1/4. Functionally, catalyzes two activities which are involved in the cyclic version of arginine biosynthesis: the synthesis of acetylglutamate from glutamate and acetyl-CoA, and of ornithine by transacetylation between acetylornithine and glutamate. The polypeptide is Arginine biosynthesis bifunctional protein ArgJ, chloroplastic (Populus trichocarpa (Western balsam poplar)).